Reading from the N-terminus, the 485-residue chain is UDP-N-acetylmuramate--L-alanine ligase (485 aa).

ATP is bound at residue 127-133; the sequence is GTHGKTT.

Belongs to the MurCDEF family.

The protein localises to the cytoplasm. The enzyme catalyses UDP-N-acetyl-alpha-D-muramate + L-alanine + ATP = UDP-N-acetyl-alpha-D-muramoyl-L-alanine + ADP + phosphate + H(+). Its pathway is cell wall biogenesis; peptidoglycan biosynthesis. Cell wall formation. This is UDP-N-acetylmuramate--L-alanine ligase from Shewanella frigidimarina (strain NCIMB 400).